The primary structure comprises 622 residues: Chaperone protein HscA homolog (622 aa).

The protein belongs to the heat shock protein 70 family.

In terms of biological role, chaperone involved in the maturation of iron-sulfur cluster-containing proteins. Has a low intrinsic ATPase activity which is markedly stimulated by HscB. In Azoarcus sp. (strain BH72), this protein is Chaperone protein HscA homolog.